The following is a 179-amino-acid chain: MSRIGKKPIAVPSGVEITIDGQHVSVKGPKGTLTHTVAEPITVTRGEDGQLEVTRPNDERRNRSLHGLTRTLIANMIEGVTKGYEKKMEIFGVGYRVQAKGSNLEFALGYSHPVPVEAPEGITFAVESPTKFSVSGIDKQKVGQISAVIHGLRKPDPYKGKGIRYAGEVVRRKVGKTGK.

It belongs to the universal ribosomal protein uL6 family. As to quaternary structure, part of the 50S ribosomal subunit.

Its function is as follows. This protein binds to the 23S rRNA, and is important in its secondary structure. It is located near the subunit interface in the base of the L7/L12 stalk, and near the tRNA binding site of the peptidyltransferase center. This is Large ribosomal subunit protein uL6 from Nocardia farcinica (strain IFM 10152).